The sequence spans 89 residues: UPF0145 protein MJ1170 (89 aa).

The protein belongs to the UPF0145 family. Highly divergent.

This Methanocaldococcus jannaschii (strain ATCC 43067 / DSM 2661 / JAL-1 / JCM 10045 / NBRC 100440) (Methanococcus jannaschii) protein is UPF0145 protein MJ1170.